The following is a 629-amino-acid chain: Chaperone protein HtpG (629 aa).

The tract at residues 1-335 (MSSNPTSSVR…TEDLPLNVSR (335 aa)) is a; substrate-binding. The interval 336 to 547 (ELVQASPVMA…KDALDSQFEK (212 aa)) is b. The segment at 548-629 (MMKMMNKDAD…NELVEAATRS (82 aa)) is c.

It belongs to the heat shock protein 90 family. Homodimer.

It localises to the cytoplasm. Functionally, molecular chaperone. Has ATPase activity. This chain is Chaperone protein HtpG, found in Chlorobaculum tepidum (strain ATCC 49652 / DSM 12025 / NBRC 103806 / TLS) (Chlorobium tepidum).